The chain runs to 156 residues: Bacterial ferritin (156 aa).

In terms of domain architecture, Ferritin-like diiron spans 1 to 146 (MKGKPAVLAQ…KQLGLIEKIG (146 aa)). Glu-18, Glu-51, His-54, Glu-94, Glu-128, and His-131 together coordinate Fe cation.

Belongs to the bacterioferritin family. In terms of assembly, the bacterioferritin (BFR) complex is formed of 24 subunits (BfrA and BfrB) of unknown stoichiometry. The BFR is arranged as 12 dimers that are packed together to form an approximately spherical molecule with a central cavity, in which large amounts of iron can be deposited.

Its subcellular location is the cytoplasm. It catalyses the reaction 4 Fe(2+) + O2 + 4 H(+) = 4 Fe(3+) + 2 H2O. It carries out the reaction Fe(2+)(in) = Fe(2+)(out). In terms of biological role, part of the iron-storage bacterioferritin (BFR) complex which stores about 50% of intracellular iron. Iron-storage protein, whose ferroxidase center binds Fe(2+), oxidizes it using dioxygen to Fe(3+), and participates in the subsequent Fe(3+) oxide mineral core formation within the central cavity of the BFR protein shell. BFR rapidly binds iron in labeling experiments in vivo during iron-limiting conditions. This is Bacterial ferritin from Synechocystis sp. (strain ATCC 27184 / PCC 6803 / Kazusa).